The primary structure comprises 271 residues: ATP synthase subunit delta (271 aa).

This sequence belongs to the ATPase delta chain family. In terms of assembly, F-type ATPases have 2 components, F(1) - the catalytic core - and F(0) - the membrane proton channel. F(1) has five subunits: alpha(3), beta(3), gamma(1), delta(1), epsilon(1). F(0) has three main subunits: a(1), b(2) and c(10-14). The alpha and beta chains form an alternating ring which encloses part of the gamma chain. F(1) is attached to F(0) by a central stalk formed by the gamma and epsilon chains, while a peripheral stalk is formed by the delta and b chains.

It is found in the cell membrane. In terms of biological role, f(1)F(0) ATP synthase produces ATP from ADP in the presence of a proton or sodium gradient. F-type ATPases consist of two structural domains, F(1) containing the extramembraneous catalytic core and F(0) containing the membrane proton channel, linked together by a central stalk and a peripheral stalk. During catalysis, ATP synthesis in the catalytic domain of F(1) is coupled via a rotary mechanism of the central stalk subunits to proton translocation. Its function is as follows. This protein is part of the stalk that links CF(0) to CF(1). It either transmits conformational changes from CF(0) to CF(1) or is implicated in proton conduction. The polypeptide is ATP synthase subunit delta (Renibacterium salmoninarum (strain ATCC 33209 / DSM 20767 / JCM 11484 / NBRC 15589 / NCIMB 2235)).